The following is a 120-amino-acid chain: Large ribosomal subunit protein uL22 (120 aa).

Belongs to the universal ribosomal protein uL22 family. In terms of assembly, part of the 50S ribosomal subunit.

Functionally, this protein binds specifically to 23S rRNA; its binding is stimulated by other ribosomal proteins, e.g. L4, L17, and L20. It is important during the early stages of 50S assembly. It makes multiple contacts with different domains of the 23S rRNA in the assembled 50S subunit and ribosome. In terms of biological role, the globular domain of the protein is located near the polypeptide exit tunnel on the outside of the subunit, while an extended beta-hairpin is found that lines the wall of the exit tunnel in the center of the 70S ribosome. The sequence is that of Large ribosomal subunit protein uL22 from Corynebacterium diphtheriae (strain ATCC 700971 / NCTC 13129 / Biotype gravis).